The chain runs to 214 residues: 3,4-dihydroxy-2-butanone 4-phosphate synthase (214 aa).

D-ribulose 5-phosphate contacts are provided by residues 37-38 (RE), Asp42, 150-154 (RPGHT), and Glu174. Position 38 (Glu38) interacts with Mg(2+). A Mg(2+)-binding site is contributed by His153.

The protein belongs to the DHBP synthase family. As to quaternary structure, homodimer. The cofactor is Mg(2+). It depends on Mn(2+) as a cofactor.

It carries out the reaction D-ribulose 5-phosphate = (2S)-2-hydroxy-3-oxobutyl phosphate + formate + H(+). It participates in cofactor biosynthesis; riboflavin biosynthesis; 2-hydroxy-3-oxobutyl phosphate from D-ribulose 5-phosphate: step 1/1. In terms of biological role, catalyzes the conversion of D-ribulose 5-phosphate to formate and 3,4-dihydroxy-2-butanone 4-phosphate. The sequence is that of 3,4-dihydroxy-2-butanone 4-phosphate synthase from Mannheimia succiniciproducens (strain KCTC 0769BP / MBEL55E).